The sequence spans 692 residues: A-type ATP synthase subunit I (692 aa).

7 consecutive transmembrane segments (helical) span residues 389 to 409, 422 to 442, 494 to 514, 531 to 551, 553 to 573, 602 to 622, and 624 to 644; these read GIML…LFIW, LGYI…ITGG, ILVF…FVGF, GVWI…FAGA, TMIA…ASMY, ARLL…NIMA, and LVGE…LLVG.

It belongs to the V-ATPase 116 kDa subunit family. The A-type ATPase is composed of subunits A(3), B(3), C, D, E(1 or 2), F, H(2), I and K(x).

The protein resides in the cell membrane. Its function is as follows. Component of the A-type ATP synthase that produces ATP from ADP in the presence of a proton gradient across the membrane. The protein is A-type ATP synthase subunit I of Methanocaldococcus jannaschii (strain ATCC 43067 / DSM 2661 / JAL-1 / JCM 10045 / NBRC 100440) (Methanococcus jannaschii).